Consider the following 240-residue polypeptide: 1-(5-phosphoribosyl)-5-[(5-phosphoribosylamino)methylideneamino] imidazole-4-carboxamide isomerase (240 aa).

The Proton acceptor role is filled by Asp-8. The active-site Proton donor is the Asp-129.

This sequence belongs to the HisA/HisF family.

The protein resides in the cytoplasm. The catalysed reaction is 1-(5-phospho-beta-D-ribosyl)-5-[(5-phospho-beta-D-ribosylamino)methylideneamino]imidazole-4-carboxamide = 5-[(5-phospho-1-deoxy-D-ribulos-1-ylimino)methylamino]-1-(5-phospho-beta-D-ribosyl)imidazole-4-carboxamide. It functions in the pathway amino-acid biosynthesis; L-histidine biosynthesis; L-histidine from 5-phospho-alpha-D-ribose 1-diphosphate: step 4/9. In Listeria welshimeri serovar 6b (strain ATCC 35897 / DSM 20650 / CCUG 15529 / CIP 8149 / NCTC 11857 / SLCC 5334 / V8), this protein is 1-(5-phosphoribosyl)-5-[(5-phosphoribosylamino)methylideneamino] imidazole-4-carboxamide isomerase.